A 134-amino-acid chain; its full sequence is Protein LctB (134 aa).

In Geobacillus stearothermophilus (Bacillus stearothermophilus), this protein is Protein LctB (lctB).